A 62-amino-acid chain; its full sequence is Photosystem II reaction center protein Z (62 aa).

2 helical membrane passes run 8-28 and 41-61; these read AVFA…VVFA and FSGT…NSLI.

This sequence belongs to the PsbZ family. As to quaternary structure, PSII is composed of 1 copy each of membrane proteins PsbA, PsbB, PsbC, PsbD, PsbE, PsbF, PsbH, PsbI, PsbJ, PsbK, PsbL, PsbM, PsbT, PsbY, PsbZ, Psb30/Ycf12, at least 3 peripheral proteins of the oxygen-evolving complex and a large number of cofactors. It forms dimeric complexes.

Its subcellular location is the plastid. It localises to the chloroplast thylakoid membrane. May control the interaction of photosystem II (PSII) cores with the light-harvesting antenna, regulates electron flow through the 2 photosystem reaction centers. PSII is a light-driven water plastoquinone oxidoreductase, using light energy to abstract electrons from H(2)O, generating a proton gradient subsequently used for ATP formation. The chain is Photosystem II reaction center protein Z from Citrus sinensis (Sweet orange).